The sequence spans 418 residues: MAP kinase-interacting serine/threonine-protein kinase 1 (418 aa).

Residues 1-23 (MVSSQPVPFDDGGKRRKKKRKTR) form a disordered region. The Protein kinase domain occupies 37–321 (RLTDELLGEG…AFQVLQHPWL (285 aa)). Residues 43 to 51 (LGEGAYAKV) and lysine 66 each bind ATP. Aspartate 158 serves as the catalytic Proton acceptor. Residues 384–418 (PPSKSRLAKRRAQAHARKGGSHPTHSTVTASQGTP) are disordered. The segment covering 389–403 (RLAKRRAQAHARKGG) has biased composition (basic residues). Positions 406 to 418 (PTHSTVTASQGTP) are enriched in polar residues.

The protein belongs to the protein kinase superfamily. CAMK Ser/Thr protein kinase family. Mg(2+) serves as cofactor.

The catalysed reaction is L-seryl-[protein] + ATP = O-phospho-L-seryl-[protein] + ADP + H(+). It catalyses the reaction L-threonyl-[protein] + ATP = O-phospho-L-threonyl-[protein] + ADP + H(+). In terms of biological role, may play a role in the response to environmental stress and cytokines. Appears to regulate translation by phosphorylating EIF4E, thus increasing the affinity of this protein for the 7-methylguanosine-containing mRNA cap. In Xenopus laevis (African clawed frog), this protein is MAP kinase-interacting serine/threonine-protein kinase 1 (mknk1).